The following is a 218-amino-acid chain: Small ribosomal subunit protein uS3c (218 aa).

Residues 39–109 (IRNYVKVNLS…QIRINVTELK (71 aa)) enclose the KH type-2 domain.

Belongs to the universal ribosomal protein uS3 family. Part of the 30S ribosomal subunit.

The protein localises to the plastid. It is found in the chloroplast. The sequence is that of Small ribosomal subunit protein uS3c (rps3) from Rhodomonas salina (Cryptomonas salina).